A 435-amino-acid polypeptide reads, in one-letter code: Methylenetetrahydrofolate--tRNA-(uracil-5-)-methyltransferase TrmFO (435 aa).

FAD is bound at residue 7 to 12 (GAGLAG).

Belongs to the MnmG family. TrmFO subfamily. Requires FAD as cofactor.

The protein resides in the cytoplasm. It catalyses the reaction uridine(54) in tRNA + (6R)-5,10-methylene-5,6,7,8-tetrahydrofolate + NADH + H(+) = 5-methyluridine(54) in tRNA + (6S)-5,6,7,8-tetrahydrofolate + NAD(+). The enzyme catalyses uridine(54) in tRNA + (6R)-5,10-methylene-5,6,7,8-tetrahydrofolate + NADPH + H(+) = 5-methyluridine(54) in tRNA + (6S)-5,6,7,8-tetrahydrofolate + NADP(+). Catalyzes the folate-dependent formation of 5-methyl-uridine at position 54 (M-5-U54) in all tRNAs. This chain is Methylenetetrahydrofolate--tRNA-(uracil-5-)-methyltransferase TrmFO, found in Thermotoga maritima (strain ATCC 43589 / DSM 3109 / JCM 10099 / NBRC 100826 / MSB8).